The chain runs to 642 residues: tRNA uridine 5-carboxymethylaminomethyl modification enzyme MnmG (642 aa).

Residues 12-17 (GAGHAG), V124, and S179 each bind FAD. Residue 272–286 (GPRYCPSIEDKITRF) participates in NAD(+) binding. Q369 serves as a coordination point for FAD.

It belongs to the MnmG family. As to quaternary structure, homodimer. Heterotetramer of two MnmE and two MnmG subunits. It depends on FAD as a cofactor.

The protein localises to the cytoplasm. NAD-binding protein involved in the addition of a carboxymethylaminomethyl (cmnm) group at the wobble position (U34) of certain tRNAs, forming tRNA-cmnm(5)s(2)U34. The protein is tRNA uridine 5-carboxymethylaminomethyl modification enzyme MnmG of Bdellovibrio bacteriovorus (strain ATCC 15356 / DSM 50701 / NCIMB 9529 / HD100).